A 575-amino-acid polypeptide reads, in one-letter code: Isocitrate dehydrogenase kinase/phosphatase (575 aa).

ATP contacts are provided by residues 315–321 (APGIRGM) and Lys336. Asp371 is a catalytic residue.

Belongs to the AceK family.

It is found in the cytoplasm. The catalysed reaction is L-seryl-[isocitrate dehydrogenase] + ATP = O-phospho-L-seryl-[isocitrate dehydrogenase] + ADP + H(+). Bifunctional enzyme which can phosphorylate or dephosphorylate isocitrate dehydrogenase (IDH) on a specific serine residue. This is a regulatory mechanism which enables bacteria to bypass the Krebs cycle via the glyoxylate shunt in response to the source of carbon. When bacteria are grown on glucose, IDH is fully active and unphosphorylated, but when grown on acetate or ethanol, the activity of IDH declines drastically concomitant with its phosphorylation. In Citrobacter koseri (strain ATCC BAA-895 / CDC 4225-83 / SGSC4696), this protein is Isocitrate dehydrogenase kinase/phosphatase.